The chain runs to 241 residues: Isoprenyl transferase (241 aa).

Aspartate 17 is an active-site residue. Residue aspartate 17 coordinates Mg(2+). Substrate contacts are provided by residues 18-21, tryptophan 22, arginine 30, histidine 34, and 62-64; these read GNGR and STE. The active-site Proton acceptor is asparagine 65. Substrate-binding positions include tryptophan 66, arginine 68, arginine 186, and 192 to 194; that span reads RLS. Glutamate 205 is a binding site for Mg(2+).

It belongs to the UPP synthase family. Homodimer. Mg(2+) serves as cofactor.

Catalyzes the condensation of isopentenyl diphosphate (IPP) with allylic pyrophosphates generating different type of terpenoids. This chain is Isoprenyl transferase, found in Leptospira interrogans serogroup Icterohaemorrhagiae serovar copenhageni (strain Fiocruz L1-130).